The sequence spans 244 residues: Na(+)-translocating NADH-quinone reductase subunit E (244 aa).

Helical transmembrane passes span 11–31, 50–70, 90–110, 123–143, 153–173, and 191–211; these read LLGI…TFLG, MSVA…HYFI, FLEL…LEVL, GIFL…LFGI, VVFS…FATI, and ISFI…GIDI. Over residues 222-236 the composition is skewed to polar residues; sequence VTNIATDSPQPNTHS. Positions 222–244 are disordered; the sequence is VTNIATDSPQPNTHSSSEEPKAS.

Belongs to the NqrDE/RnfAE family. As to quaternary structure, composed of six subunits; NqrA, NqrB, NqrC, NqrD, NqrE and NqrF.

It is found in the cell inner membrane. The enzyme catalyses a ubiquinone + n Na(+)(in) + NADH + H(+) = a ubiquinol + n Na(+)(out) + NAD(+). Its function is as follows. NQR complex catalyzes the reduction of ubiquinone-1 to ubiquinol by two successive reactions, coupled with the transport of Na(+) ions from the cytoplasm to the periplasm. NqrA to NqrE are probably involved in the second step, the conversion of ubisemiquinone to ubiquinol. The chain is Na(+)-translocating NADH-quinone reductase subunit E from Chlamydia trachomatis serovar A (strain ATCC VR-571B / DSM 19440 / HAR-13).